The following is a 100-amino-acid chain: Integration host factor subunit alpha (100 aa).

This sequence belongs to the bacterial histone-like protein family. Heterodimer of an alpha and a beta chain.

In terms of biological role, this protein is one of the two subunits of integration host factor, a specific DNA-binding protein that functions in genetic recombination as well as in transcriptional and translational control. This Ruegeria pomeroyi (strain ATCC 700808 / DSM 15171 / DSS-3) (Silicibacter pomeroyi) protein is Integration host factor subunit alpha.